The primary structure comprises 214 residues: MKFFLDTANVAAIKAINELGVVDGVTTNPTIISREGRDFETVIKEICDIVDGPISAEVTGLTADAMVEEARSIAKWHDNVVVKIPMTTEGLKATNILSKEGIKTNVTLIFTVSQGLMAMKAGATYISPFIGRLEDIGTDAYQLISDLREIIDLYDFQTEIIAASIRTTAHVEAVAKLGAHIATIPDPLFAKMTQHPLTTNGLKTFMEDWASFKK.

Lys-83 acts as the Schiff-base intermediate with substrate in catalysis.

Belongs to the transaldolase family. Type 3B subfamily.

The protein resides in the cytoplasm. The catalysed reaction is D-sedoheptulose 7-phosphate + D-glyceraldehyde 3-phosphate = D-erythrose 4-phosphate + beta-D-fructose 6-phosphate. It functions in the pathway carbohydrate degradation; pentose phosphate pathway; D-glyceraldehyde 3-phosphate and beta-D-fructose 6-phosphate from D-ribose 5-phosphate and D-xylulose 5-phosphate (non-oxidative stage): step 2/3. Its function is as follows. Transaldolase is important for the balance of metabolites in the pentose-phosphate pathway. In Streptococcus pyogenes serotype M2 (strain MGAS10270), this protein is Probable transaldolase.